Reading from the N-terminus, the 343-residue chain is D-beta-hydroxybutyrate dehydrogenase, mitochondrial (343 aa).

The N-terminal 46 residues, 1–46 (MLAARLSRPLSQLPGKALSVCDRENGTRHTLLFYPASFSPDTRRTY), are a transit peptide targeting the mitochondrion. 59–83 (LVTGCDSGFGFSLAKHLHSKGFLVF) is a binding site for NAD(+). The residue at position 73 (K73) is an N6-acetyllysine. Position 103 is an N6-acetyllysine; alternate (K103). K103 bears the N6-succinyllysine; alternate mark. Residues K132 and K177 each carry the N6-acetyllysine modification. S195 contributes to the substrate binding site. Y208 serves as the catalytic Proton acceptor. K212 bears the N6-acetyllysine mark. The O-linked (GlcNAc) serine glycan is linked to S219. S246 is subject to Phosphoserine. At K258 the chain carries N6-acetyllysine. K259 is subject to N6-acetyllysine; alternate. An N6-succinyllysine; alternate modification is found at K259. Position 280 is an N6-acetyllysine (K280).

The protein belongs to the short-chain dehydrogenases/reductases (SDR) family. In terms of assembly, homotetramer. In terms of tissue distribution, expressed in liver.

It is found in the mitochondrion inner membrane. The protein localises to the mitochondrion matrix. It catalyses the reaction (R)-3-hydroxybutanoate + NAD(+) = acetoacetate + NADH + H(+). With respect to regulation, requires phosphatidylcholine as an allosteric activator for enzymatic activity. This is D-beta-hydroxybutyrate dehydrogenase, mitochondrial from Rattus norvegicus (Rat).